A 649-amino-acid polypeptide reads, in one-letter code: Endoplasmic reticulum chaperone BiP (649 aa).

An N-terminal signal peptide occupies residues M1–C20. ATP contacts are provided by residues G36 to Y39, K96, G226 to T228, E292 to S299, and G363 to R366. The nucleotide-binding (NBD) stretch occupies residues K125 to K279. Positions V399–T499 are substrate-binding (SBD). Residues K646 to L649 carry the Prevents secretion from ER motif.

This sequence belongs to the heat shock protein 70 family.

Its subcellular location is the endoplasmic reticulum lumen. It carries out the reaction ATP + H2O = ADP + phosphate + H(+). Its activity is regulated as follows. The chaperone activity is regulated by ATP-induced allosteric coupling of the nucleotide-binding (NBD) and substrate-binding (SBD) domains. In the ADP-bound and nucleotide-free (apo) states, the two domains have little interaction. In contrast, in the ATP-bound state the two domains are tightly coupled, which results in drastically accelerated kinetics in both binding and release of polypeptide substrates. J domain-containing co-chaperones stimulate the ATPase activity and are required for efficient substrate recognition. In terms of biological role, endoplasmic reticulum chaperone that plays a key role in protein folding and quality control in the endoplasmic reticulum lumen. Involved in the correct folding of proteins and degradation of misfolded proteins. Acts as a key repressor of the unfolded protein response (UPR). This chain is Endoplasmic reticulum chaperone BiP, found in Echinococcus multilocularis (Fox tapeworm).